We begin with the raw amino-acid sequence, 93 residues long: Small ribosomal subunit protein uS19 (93 aa).

This sequence belongs to the universal ribosomal protein uS19 family.

Protein S19 forms a complex with S13 that binds strongly to the 16S ribosomal RNA. This chain is Small ribosomal subunit protein uS19, found in Clostridioides difficile (strain 630) (Peptoclostridium difficile).